A 252-amino-acid chain; its full sequence is Transcriptional regulatory protein HptR (252 aa).

Residues 3-118 (KVVICDDERI…QLEVILGRLV (116 aa)) form the Response regulatory domain. Asp-55 is subject to 4-aspartylphosphate. The 98-residue stretch at 153-250 (NQIVDQIKQS…QMSPSDYCKQ (98 aa)) folds into the HTH araC/xylS-type domain. 2 DNA-binding regions (H-T-H motif) span residues 170–191 (SDLIQHIDVSESYAMRTFKDHV) and 217–240 (HYEIADKVGFSEYKMFSYHFKKYL).

Phosphorylated by HptS.

Its subcellular location is the cytoplasm. Member of the two-component regulatory system HptS/HptR that regulates genes involved in hexose phosphate transport system in response to changes in extracellular phosphate sources. Activates uhpT expression to facilitate glucose-6-phosphate/G6P utilization by directly binding to its promoter. Antagonizes CcpA-dependent transcription of a subset of CcpA-regulated genes involved in antibiotic susceptibility. The sequence is that of Transcriptional regulatory protein HptR (hptR) from Staphylococcus aureus (strain Mu50 / ATCC 700699).